Consider the following 68-residue polypeptide: uncharacterized protein (68 aa).

This is an uncharacterized protein from Salmonella typhi.